The primary structure comprises 245 residues: tRNA (guanine-N(1)-)-methyltransferase (245 aa).

S-adenosyl-L-methionine is bound by residues Gly-114 and 133 to 138 (IGDYVL).

Belongs to the RNA methyltransferase TrmD family. In terms of assembly, homodimer.

Its subcellular location is the cytoplasm. The enzyme catalyses guanosine(37) in tRNA + S-adenosyl-L-methionine = N(1)-methylguanosine(37) in tRNA + S-adenosyl-L-homocysteine + H(+). Its function is as follows. Specifically methylates guanosine-37 in various tRNAs. This is tRNA (guanine-N(1)-)-methyltransferase from Prochlorococcus marinus (strain MIT 9312).